We begin with the raw amino-acid sequence, 87 residues long: DNA-directed RNA polymerase subunit Rpo5 (87 aa).

The protein belongs to the archaeal Rpo5/eukaryotic RPB5 RNA polymerase subunit family. As to quaternary structure, part of the RNA polymerase complex.

The protein resides in the cytoplasm. It catalyses the reaction RNA(n) + a ribonucleoside 5'-triphosphate = RNA(n+1) + diphosphate. Its function is as follows. DNA-dependent RNA polymerase (RNAP) catalyzes the transcription of DNA into RNA using the four ribonucleoside triphosphates as substrates. The sequence is that of DNA-directed RNA polymerase subunit Rpo5 from Thermoplasma acidophilum (strain ATCC 25905 / DSM 1728 / JCM 9062 / NBRC 15155 / AMRC-C165).